We begin with the raw amino-acid sequence, 355 residues long: IGF-like family receptor 1 (355 aa).

The first 22 residues, 1-22, serve as a signal peptide directing secretion; the sequence is MGPGRCLLTALLLLALAPPPEA. Residues 23–163 lie on the Extracellular side of the membrane; sequence SQYCGRLEYW…PQQAWPNFLP (141 aa). Residues 120 to 147 form a disordered region; sequence KGHCPLTPGNPGAPSSQERSSPASSIAW. Residues 132–144 show a composition bias toward low complexity; that stretch reads APSSQERSSPASS. A helical transmembrane segment spans residues 164–184; sequence LVVLVLLLTLAVIAILLFILL. The Cytoplasmic portion of the chain corresponds to 185–355; the sequence is WHLCWPKEKA…KLGSSGVCWA (171 aa).

The protein localises to the cell membrane. Probable cell membrane receptor for the IGF-like family proteins. Binds IGFL1 and IGFL3 with a higher affinity. May also bind IGFL2. The protein is IGF-like family receptor 1 (IGFLR1) of Homo sapiens (Human).